Reading from the N-terminus, the 445-residue chain is Succinate--CoA ligase [ADP-forming] subunit beta, mitochondrial (445 aa).

A mitochondrion-targeting transit peptide spans 1-17 (MLSNIVKKTIQSSKNLK). The 228-residue stretch at 43-270 (QKMMKSYGIN…DNAAFRHPDI (228 aa)) folds into the ATP-grasp domain. ATP is bound by residues Lys80 and 87–89 (GRG). Residues Asn240 and Asp254 each coordinate Mg(2+). Substrate-binding positions include Asn305 and 362–364 (GIM).

Belongs to the succinate/malate CoA ligase beta subunit family. ATP-specific subunit beta subfamily. As to quaternary structure, heterodimer of an alpha and a beta subunit. The beta subunit determines specificity for ATP. The cofactor is Mg(2+).

It localises to the mitochondrion. It catalyses the reaction succinate + ATP + CoA = succinyl-CoA + ADP + phosphate. It participates in carbohydrate metabolism; tricarboxylic acid cycle; succinate from succinyl-CoA (ligase route): step 1/1. Functionally, ATP-specific succinyl-CoA synthetase functions in the citric acid cycle (TCA), coupling the hydrolysis of succinyl-CoA to the synthesis of ATP and thus represents the only step of substrate-level phosphorylation in the TCA. The beta subunit provides nucleotide specificity of the enzyme and binds the substrate succinate, while the binding sites for coenzyme A and phosphate are found in the alpha subunit. This chain is Succinate--CoA ligase [ADP-forming] subunit beta, mitochondrial (scsC), found in Dictyostelium discoideum (Social amoeba).